A 308-amino-acid polypeptide reads, in one-letter code: Quinolinate synthase (308 aa).

Iminosuccinate is bound by residues His-21 and Ser-38. Cys-83 provides a ligand contact to [4Fe-4S] cluster. Iminosuccinate-binding positions include 109 to 111 and Ser-126; that span reads YIN. Cys-170 lines the [4Fe-4S] cluster pocket. Iminosuccinate contacts are provided by residues 196–198 and Thr-213; that span reads HPE. A [4Fe-4S] cluster-binding site is contributed by Cys-263.

Belongs to the quinolinate synthase family. Type 2 subfamily. [4Fe-4S] cluster serves as cofactor.

It is found in the cytoplasm. The catalysed reaction is iminosuccinate + dihydroxyacetone phosphate = quinolinate + phosphate + 2 H2O + H(+). The protein operates within cofactor biosynthesis; NAD(+) biosynthesis; quinolinate from iminoaspartate: step 1/1. Functionally, catalyzes the condensation of iminoaspartate with dihydroxyacetone phosphate to form quinolinate. In Sulfurisphaera tokodaii (strain DSM 16993 / JCM 10545 / NBRC 100140 / 7) (Sulfolobus tokodaii), this protein is Quinolinate synthase.